Here is a 142-residue protein sequence, read N- to C-terminus: Malate dehydrogenase, mitochondrial (142 aa).

NAD(+)-binding positions include 1–6 and Asp26; that span reads ASGGIG. Arg73 and Arg79 together coordinate substrate. Residues Asn86 and 109–111 each bind NAD(+); that span reads ITN. Asn111 is a binding site for substrate.

This sequence belongs to the LDH/MDH superfamily. MDH type 1 family. In terms of assembly, homodimer.

It localises to the mitochondrion matrix. The enzyme catalyses (S)-malate + NAD(+) = oxaloacetate + NADH + H(+). This Schistosoma mansoni (Blood fluke) protein is Malate dehydrogenase, mitochondrial.